We begin with the raw amino-acid sequence, 432 residues long: RING finger protein 44 (432 aa).

Residues 1–86 (MRPWALAVTR…GGSPRMLHPA (86 aa)) form a disordered region. Pro residues predominate over residues 56-65 (QQPPSRPPHL). The segment at 380 to 421 (CVVCFSDFEARQLLRVLPCNHEFHTKCVDKWLKANRTCPICR) adopts an RING-type; atypical zinc-finger fold.

The sequence is that of RING finger protein 44 (RNF44) from Homo sapiens (Human).